Consider the following 259-residue polypeptide: Probable dihydroorotate dehydrogenase B (NAD(+)), electron transfer subunit (259 aa).

The 89-residue stretch at Met1 to Leu89 folds into the FAD-binding FR-type domain. Residues Cys211, Cys216, Cys219, and Cys229 each coordinate [2Fe-2S] cluster.

The protein belongs to the PyrK family. In terms of assembly, heterotetramer of 2 PyrK and 2 PyrD type B subunits. The cofactor is [2Fe-2S] cluster. FAD is required as a cofactor.

The protein operates within pyrimidine metabolism; UMP biosynthesis via de novo pathway; orotate from (S)-dihydroorotate (NAD(+) route): step 1/1. In terms of biological role, responsible for channeling the electrons from the oxidation of dihydroorotate from the FMN redox center in the PyrD type B subunit to the ultimate electron acceptor NAD(+). This Methanosarcina mazei (strain ATCC BAA-159 / DSM 3647 / Goe1 / Go1 / JCM 11833 / OCM 88) (Methanosarcina frisia) protein is Probable dihydroorotate dehydrogenase B (NAD(+)), electron transfer subunit.